A 250-amino-acid chain; its full sequence is Formylaminopyrimidine transport permease protein ThiX (250 aa).

6 helical membrane passes run 5–25, 62–82, 94–114, 115–135, 172–192, and 216–236; these read YQAL…EISA, IISI…LLMF, LLVA…VLWF, GYSI…PITV, LPSF…GAAV, and PGVF…FAAI. The ABC transmembrane type-1 domain occupies 56–237; sequence LPATLAIISI…LGILGFAAIK (182 aa).

The protein belongs to the binding-protein-dependent transport system permease family. The complex is likely composed of an ATP-binding protein (ThiZ), a transmembrane protein (ThiX) and a solute-binding protein (ThiY).

The protein resides in the cell membrane. It participates in cofactor biosynthesis; thiamine diphosphate biosynthesis. Its function is as follows. Participates in a thiamine pyrimidine salvage pathway as part of the ABC transporter complex ThiXYZ involved in the import of thiamine degradation products such as the formylaminopyrimidine N-formyl-4-amino-5-aminomethyl-2-methylpyrimidine (FAMP). Is probably responsible for the translocation of the substrate across the membrane. The protein is Formylaminopyrimidine transport permease protein ThiX of Halalkalibacterium halodurans (strain ATCC BAA-125 / DSM 18197 / FERM 7344 / JCM 9153 / C-125) (Bacillus halodurans).